The primary structure comprises 371 residues: N-acetyldiaminopimelate deacetylase (371 aa).

D68 is a catalytic residue. E127 acts as the Proton acceptor in catalysis.

It belongs to the peptidase M20A family. N-acetyldiaminopimelate deacetylase subfamily.

The catalysed reaction is N-acetyl-(2S,6S)-2,6-diaminopimelate + H2O = (2S,6S)-2,6-diaminopimelate + acetate. Its pathway is amino-acid biosynthesis; L-lysine biosynthesis via DAP pathway; LL-2,6-diaminopimelate from (S)-tetrahydrodipicolinate (acetylase route): step 3/3. Its function is as follows. Catalyzes the conversion of N-acetyl-diaminopimelate to diaminopimelate and acetate. This Listeria monocytogenes serotype 4b (strain CLIP80459) protein is N-acetyldiaminopimelate deacetylase.